Consider the following 363-residue polypeptide: MKKGGFSNNLKLAIPVAGEQSITKFLTQSGTFKDGDLRVNKDGVRIISQLEPEVLSPIKPADDQLSLSDLDMVKVIGKGSSGVVQLVQHKWTGQFFALKVIQLNIDEAIRKAIAQELKINQSSQCPNLVTSYQSFYDNGAISLILEYMDGGSLADFLKSVKAIPDSYLSAIFRQVLQGLIYLHHDRHIIHRDLKPSNLLINHRGEVKITDFGVSTVMTNTAGLANTFVGTYNYMSPERIVGNKYGNKSDIWSLGLVVLECATGKFPYAPPNQEETWTSVFELMEAIVDQPPPALPSGNFSPELSSFISTCLQKDPNSRSSAKELMEHPFLNKYDYSGINLASYFTDAGSPLATLGNLSGTFSV.

Phosphoserine is present on serine 56. Positions 70–330 constitute a Protein kinase domain; that stretch reads LDMVKVIGKG…AKELMEHPFL (261 aa). ATP contacts are provided by residues 76-84 and lysine 99; that span reads IGKGSSGVV. Aspartate 192 serves as the catalytic Proton acceptor. Phosphothreonine occurs at positions 220, 226, and 230.

The protein belongs to the protein kinase superfamily. STE Ser/Thr protein kinase family. MAP kinase kinase subfamily. Interacts with MEKK1, MPK4 and MPK6. May form a ternary complex composed of MEKK1 and MKK1/MKK2 and MPK4. Interacts with MPK10 and MPK11. Interacts with MAPKKK5 mainly in the cytosol. Phosphorylation at Thr-220 and Thr-226 by MAP kinase kinase kinases positively regulates kinase activity. Phosphorylated by MEKK1 in response to cold. Phosphorylated by MAPKKK5.

The catalysed reaction is L-seryl-[protein] + ATP = O-phospho-L-seryl-[protein] + ADP + H(+). It catalyses the reaction L-threonyl-[protein] + ATP = O-phospho-L-threonyl-[protein] + ADP + H(+). It carries out the reaction L-tyrosyl-[protein] + ATP = O-phospho-L-tyrosyl-[protein] + ADP + H(+). Activated in response to cold and salt stresses through serine and threonine phosphorylation by MEKK1. Its function is as follows. MEKK1, MKK1/MKK2 and MPK4 function in a signaling pathway that modulates the expression of genes responding to biotic and abiotic stresses and also plays an important role in pathogen defense by negatively regulating innate immunity. Plays a role in abiotic stress tolerance and plant disease resistance through activation of MPK4 and MPK6 by phosphorylation. Acts redundantly with MKK1. The chain is Mitogen-activated protein kinase kinase 2 (MKK2) from Arabidopsis thaliana (Mouse-ear cress).